The primary structure comprises 562 residues: Arginine--tRNA ligase (562 aa).

Residues 129-139 carry the 'HIGH' region motif; sequence ANPTGPLHVGH.

It belongs to the class-I aminoacyl-tRNA synthetase family. In terms of assembly, monomer.

It localises to the cytoplasm. The catalysed reaction is tRNA(Arg) + L-arginine + ATP = L-arginyl-tRNA(Arg) + AMP + diphosphate. The protein is Arginine--tRNA ligase of Xanthomonas axonopodis pv. citri (strain 306).